Here is a 213-residue protein sequence, read N- to C-terminus: StAR-related lipid transfer protein 5 (213 aa).

Residues methionine 1–glutamate 213 enclose the START domain.

Functionally, may be involved in the intracellular transport of sterols or other lipids. May bind cholesterol or other sterols. The chain is StAR-related lipid transfer protein 5 (STARD5) from Homo sapiens (Human).